The sequence spans 2202 residues: Activating signal cointegrator 1 complex subunit 3 (2202 aa).

The required for interaction with ASCC2 stretch occupies residues 1–400; that stretch reads MALPRLTGAL…RQRDADVEKI (400 aa). Ser-12 is subject to Phosphoserine. 2 coiled-coil regions span residues 18–79 and 328–356; these read KQDN…AAKQ and IQSEQEKQLMKQYRREEKRIARREKKAGE. The Helicase ATP-binding 1 domain maps to 486–669; it reads ETAYNTNENM…FLHVNPYIGL (184 aa). 499 to 506 is a binding site for ATP; that stretch reads APTGAGKT. The residue at position 572 (Lys-572) is an N6-acetyllysine. The short motif at 611–614 is the DEVH box element; sequence DEVH. Residues 728–914 enclose the Helicase C-terminal 1 domain; the sequence is TVRTAMSLIE…GTVTNVEEAV (187 aa). The SEC63 1 domain occupies 978–1287; the sequence is STDLGRTASH…GAEAVCIINF (310 aa). Positions 1336 to 1511 constitute a Helicase ATP-binding 2 domain; it reads HTLYHTDCNV…WLNIKQMGLF (176 aa). An ATP-binding site is contributed by 1349–1356; sequence APTGSGKT. The DEIH box signature appears at 1453-1456; the sequence is DEIH. Positions 1544 to 1739 constitute a Helicase C-terminal 2 domain; the sequence is PAFQAIRSHS…VLSDHLNAEI (196 aa). Residues 1812–2176 form the SEC63 2 domain; it reads PLTYGRIASY…LGLDQQYDIY (365 aa). Ser-2195 bears the Phosphoserine mark.

It belongs to the helicase family. Identified in the ASCC complex that contains ASCC1, ASCC2 and ASCC3. Functions as scaffolding subunit that interacts directly with both ASCC1 and ASCC2. Interacts directly with ALKBH3, and thereby recruits ALKBH3 to the ASCC complex. Part of the ASC-1/TRIP4 complex, that contains TRIP4, ASCC1, ASCC2 and ASCC3. Part of the RQT (ribosome quality control trigger) complex, that contains ASCC2, ASCC3 and TRIP4. Associates with ribosomes; recruited to collided ribosomes. Interacts with ZCCHC4. Interacts with ZNF598. Interacts with RPS3. In terms of tissue distribution, ubiquitous.

It is found in the nucleus. Its subcellular location is the nucleus speckle. The protein localises to the cytoplasm. The protein resides in the cytosol. It catalyses the reaction Couples ATP hydrolysis with the unwinding of duplex DNA by translocating in the 3'-5' direction.. The catalysed reaction is ATP + H2O = ADP + phosphate + H(+). In terms of biological role, ATPase involved both in DNA repair and rescue of stalled ribosomes. 3'-5' DNA helicase involved in repair of alkylated DNA: promotes DNA unwinding to generate single-stranded substrate needed for ALKBH3, enabling ALKBH3 to process alkylated N3-methylcytosine (3mC) within double-stranded regions. Also involved in activation of the ribosome quality control (RQC) pathway, a pathway that degrades nascent peptide chains during problematic translation. Drives the splitting of stalled ribosomes that are ubiquitinated in a ZNF598-dependent manner, as part of the ribosome quality control trigger (RQT) complex. Part of the ASC-1 complex that enhances NF-kappa-B, SRF and AP1 transactivation. This chain is Activating signal cointegrator 1 complex subunit 3 (ASCC3), found in Homo sapiens (Human).